The sequence spans 523 residues: MLFSSSSSSLNSEVSQVFSENISSRSTTLTESSTQSEIRQHFGNEDFSGELPKKLIQLKKLKNGGTTIKKAKEDLEYCYDSLRLYENPYVTSSVDKKCGYSIELYLDNKYKTLMFSDLQLNADYPLYYDSSLDNISTNVERERATPLQIKGKIRINIDREDQALLITSHSISLKCFTKEYACFVNSETSKNSYSDKIIKELNHTEFFESSTYPKQQLRVIHHSLNDKKILLTKGTYDYPFTFTLQANTFPASFSSFFGKTHFRIESLTTIMRIPSKPKNLLKFLKNESFTDKIILTEEIKVKRVLPSTSMLKFETFQLRSYNTASEIVVSVIGNSKLIEIGMPFQMILSITKTDSSIELQEASLAVAQRMAIPSIDLKTKKILREPYIKKSEYLLRTVESQSFDSDKTIFGFCFDDVVIPTYADGLPSWFKTFYCEPSSFYPNHAALKVTHLLLFRITYSRNELVEGLEMKKNYRITVNFPILVGDSDISTSSLLPKYEKFENISDLQDEPPLYSMVAGENSL.

In terms of assembly, interacts with SPO1 in meiosis.

Functionally, regulates expression of PIS1. The protein is Sporulation protein 23 (SPO23) of Saccharomyces cerevisiae (strain ATCC 204508 / S288c) (Baker's yeast).